The sequence spans 178 residues: Cell wall-binding protein YwsB (178 aa).

The signal sequence occupies residues 1–30; it reads MNKPTKLFSTLALAAGMTAAAAGGAGTIHA. SH3b domains are found at residues 47–111 and 116–178; these read IDSY…VKAA and TKTK…HMTK.

The protein resides in the secreted. Its subcellular location is the cell wall. Increases in stationary phase in a strain lacking the WprA protease. This chain is Cell wall-binding protein YwsB (ywsB), found in Bacillus subtilis (strain 168).